The following is a 239-amino-acid chain: Large ribosomal subunit protein uL2 (239 aa).

The disordered stretch occupies residues 200–239 (VNHPHGGKEHHIGRPSTVSRRAPPGRKVGHIAARRTGRRK). Residues 222 to 239 (PPGRKVGHIAARRTGRRK) show a composition bias toward basic residues.

It belongs to the universal ribosomal protein uL2 family. Part of the 50S ribosomal subunit. Forms a bridge to the 30S subunit in the 70S ribosome.

One of the primary rRNA binding proteins. Required for association of the 30S and 50S subunits to form the 70S ribosome, for tRNA binding and peptide bond formation. It has been suggested to have peptidyltransferase activity; this is somewhat controversial. Makes several contacts with the 16S rRNA in the 70S ribosome. In Thermococcus onnurineus (strain NA1), this protein is Large ribosomal subunit protein uL2.